The primary structure comprises 215 residues: ATP-dependent Clp protease proteolytic subunit 3 (215 aa).

Residue serine 119 is the Nucleophile of the active site. The active site involves histidine 144.

It belongs to the peptidase S14 family. As to quaternary structure, fourteen ClpP subunits assemble into 2 heptameric rings which stack back to back to give a disk-like structure with a central cavity, resembling the structure of eukaryotic proteasomes.

It is found in the cytoplasm. The catalysed reaction is Hydrolysis of proteins to small peptides in the presence of ATP and magnesium. alpha-casein is the usual test substrate. In the absence of ATP, only oligopeptides shorter than five residues are hydrolyzed (such as succinyl-Leu-Tyr-|-NHMec, and Leu-Tyr-Leu-|-Tyr-Trp, in which cleavage of the -Tyr-|-Leu- and -Tyr-|-Trp bonds also occurs).. Cleaves peptides in various proteins in a process that requires ATP hydrolysis. Has a chymotrypsin-like activity. Plays a major role in the degradation of misfolded proteins. The polypeptide is ATP-dependent Clp protease proteolytic subunit 3 (Prochlorococcus marinus subsp. pastoris (strain CCMP1986 / NIES-2087 / MED4)).